The primary structure comprises 893 residues: cGMP-specific 3',5'-cyclic phosphodiesterase (893 aa).

2 GAF domains span residues 21–173 and 205–390; these read DIDV…GIGI and NLEC…GLGI. The PDEase domain maps to 420–743; sequence GQDQTEKLIQ…RNWQDLAEKV (324 aa). Histidine 496 serves as the catalytic Proton donor. A divalent metal cation contacts are provided by histidine 500, histidine 536, aspartate 537, and aspartate 647. 2 disordered regions span residues 784 to 807 and 844 to 893; these read QQSQHGGDDSHTPEHQRSGSRLSI and HVSE…CALL. Basic and acidic residues-rich tracts occupy residues 789–800 and 844–853; these read GGDDSHTPEHQR and HVSEDMDDKS. Low complexity predominate over residues 864-880; sequence SVGRMSASSSTSSAGTV. Residues 883 to 893 are compositionally biased toward basic residues; the sequence is SKKRSKLCALL. Cysteine methyl ester is present on cysteine 890. A lipid anchor (S-farnesyl cysteine) is attached at cysteine 890. A propeptide spans 891–893 (removed in mature form); it reads ALL.

This sequence belongs to the cyclic nucleotide phosphodiesterase family. In terms of assembly, interacts with PrBP. A divalent metal cation serves as cofactor.

The protein localises to the cell membrane. It catalyses the reaction 3',5'-cyclic GMP + H2O = GMP + H(+). Its function is as follows. Has a role regulating cGMP transport in Malpighian tubule principal cells. The polypeptide is cGMP-specific 3',5'-cyclic phosphodiesterase (Drosophila virilis (Fruit fly)).